We begin with the raw amino-acid sequence, 635 residues long: Dihydrolipoyllysine-residue acetyltransferase component of pyruvate dehydrogenase complex, mitochondrial (635 aa).

The region spanning 83-160 (GKEITMPALS…EINKPIAIIV (78 aa)) is the Lipoyl-binding 1 domain. N6-lipoyllysine is present on Lys124. The interval 171-204 (KNYKPSSQASSTPVQEEAPKPKQEAPKKSTKTYP) is disordered. The span at 174–184 (KPSSQASSTPV) shows a compositional bias: polar residues. A compositionally biased stretch (basic and acidic residues) spans 187–197 (EAPKPKQEAPK). In terms of domain architecture, Lipoyl-binding 2 spans 206 to 283 (HKVVGMPALS…QINQPVCIIV (78 aa)). Lys247 bears the N6-lipoyllysine mark. The segment at 295-338 (YSVEEQSSSSSSSSQESTPSSSSSSSQESTPSQSSSQQTTRKSG) is disordered. The segment covering 298–334 (EEQSSSSSSSSQESTPSSSSSSSQESTPSQSSSQQTT) has biased composition (low complexity). The Peripheral subunit-binding (PSBD) domain maps to 342-379 (FATPAARFEASSKGYDLSAINGTGPNNRILKADVLEFV). The segment at 382–413 (KQEVAQQQQQQTTTTTKKPTTPTSSGEFTDIP) is disordered. Positions 387 to 404 (QQQQQQTTTTTKKPTTPT) are enriched in low complexity. The interval 403 to 635 (PTSSGEFTDI…YVENPIKLIL (233 aa)) is catalytic.

This sequence belongs to the 2-oxoacid dehydrogenase family. As to quaternary structure, 20 to 30 alpha(2)-beta(2) tetramers of E1 + 6 homodimers of E3 + 60 copies of E2. Requires (R)-lipoate as cofactor.

The protein resides in the mitochondrion matrix. The enzyme catalyses N(6)-[(R)-dihydrolipoyl]-L-lysyl-[protein] + acetyl-CoA = N(6)-[(R)-S(8)-acetyldihydrolipoyl]-L-lysyl-[protein] + CoA. In terms of biological role, the pyruvate dehydrogenase complex catalyzes the overall conversion of pyruvate to acetyl-CoA and CO(2). It contains multiple copies of three enzymatic components: pyruvate dehydrogenase (E1), dihydrolipoamide acetyltransferase (E2) and lipoamide dehydrogenase (E3). This Dictyostelium discoideum (Social amoeba) protein is Dihydrolipoyllysine-residue acetyltransferase component of pyruvate dehydrogenase complex, mitochondrial (pdhC).